Consider the following 872-residue polypeptide: Translation initiation factor IF-2 (872 aa).

The segment covering 130–155 (AEEEAARAAEEEAARLAEEEAARRAA) has biased composition (basic and acidic residues). Residues 130–282 (AEEEAARAAE…RERERLKHMQ (153 aa)) are disordered. Low complexity predominate over residues 156–181 (EPQSEPEAAAPAAEPVAPTAPVAAAP). Residues 182-194 (APAPATPVAPAQP) show a composition bias toward pro residues. Positions 195 to 211 (KPVAAAAPAGDATAVPR) are enriched in low complexity. The span at 271 to 282 (RARERERLKHMQ) shows a compositional bias: basic and acidic residues. One can recognise a tr-type G domain in the interval 371 to 539 (TRPPVVTVMG…AILLQAEILD (169 aa)). The tract at residues 380–387 (GHVDHGKT) is G1. 380–387 (GHVDHGKT) is a binding site for GTP. Positions 405–409 (GITQH) are G2. The G3 stretch occupies residues 427–430 (DTPG). Residues 427 to 431 (DTPGH) and 481 to 484 (NKID) each bind GTP. The interval 481-484 (NKID) is G4. The interval 517–519 (SAK) is G5.

It belongs to the TRAFAC class translation factor GTPase superfamily. Classic translation factor GTPase family. IF-2 subfamily.

The protein localises to the cytoplasm. Functionally, one of the essential components for the initiation of protein synthesis. Protects formylmethionyl-tRNA from spontaneous hydrolysis and promotes its binding to the 30S ribosomal subunits. Also involved in the hydrolysis of GTP during the formation of the 70S ribosomal complex. The sequence is that of Translation initiation factor IF-2 from Paramagnetospirillum magneticum (strain ATCC 700264 / AMB-1) (Magnetospirillum magneticum).